The chain runs to 560 residues: Nibrin homolog (560 aa).

The 63-residue stretch at 25 to 87 (YKVGRKDCDV…YGTFFNKVQG (63 aa)) folds into the FHA domain. The BRCT domain occupies 115 to 190 (TFRLSFVPIV…KQIVLGDWFK (76 aa)). Positions 511 to 518 (YKRGTVID) match the Nuclear localization signal motif.

It belongs to the Nibrin family. In terms of assembly, component of the MRN complex composed of two heterodimers RAD50 and MRE11 associated with a single NBS1.

It localises to the nucleus. It is found in the chromosome. In terms of biological role, component of the MRN complex, which plays a central role in double-strand break (DSB) repair, DNA recombination, maintenance of telomere integrity and meiosis. The MRN complex is involved in the repair of DNA double-strand breaks (DSBs) via homologous recombination (HR), an error-free mechanism which primarily occurs during S and G2 phases. The complex (1) mediates the end resection of damaged DNA, which generates proper single-stranded DNA, a key initial steps in HR, and is (2) required for the recruitment of other repair factors and efficient activation of ATM and ATR upon DNA damage. The MRN complex possesses single-strand endonuclease activity and double-strand-specific 3'-5' exonuclease activity, which are provided by MRE11, to initiate end resection, which is required for single-strand invasion and recombination. Within the MRN complex, NBS1 acts as a protein-protein adapter, which specifically recognizes and binds phosphorylated proteins, promoting their recruitment to DNA damage sites. Recruits MRE11 and RAD50 components of the MRN complex to DSBs in response to DNA damage. The protein is Nibrin homolog of Oryza sativa subsp. indica (Rice).